The primary structure comprises 82 residues: Small ribosomal subunit protein uS17 (82 aa).

It belongs to the universal ribosomal protein uS17 family. In terms of assembly, part of the 30S ribosomal subunit.

In terms of biological role, one of the primary rRNA binding proteins, it binds specifically to the 5'-end of 16S ribosomal RNA. This Afipia carboxidovorans (strain ATCC 49405 / DSM 1227 / KCTC 32145 / OM5) (Oligotropha carboxidovorans) protein is Small ribosomal subunit protein uS17.